The sequence spans 142 residues: Lipoprotein MlpI (142 aa).

The signal sequence occupies residues 1–17 (MKIINILFCLFLLMLNS). The N-palmitoyl cysteine moiety is linked to residue Cys-18. Cys-18 carries the S-diacylglycerol cysteine lipid modification. The interval 22–54 (DTNTSQTKSRQKRDLTQKEATQEKPKSKEDLLR) is disordered. Residues 33–54 (KRDLTQKEATQEKPKSKEDLLR) are compositionally biased toward basic and acidic residues.

It belongs to the Multicopy lipoprotein (Mlp) family.

Its subcellular location is the cell outer membrane. An outer membrane protein that may participate in pathogenesis. Some human Lyme disease patients have antibodies against this protein. The Mlp proteins probably undergo intragenic recombination, generating new alleles. The protein is Lipoprotein MlpI of Borreliella burgdorferi (strain ATCC 35210 / DSM 4680 / CIP 102532 / B31) (Borrelia burgdorferi).